Consider the following 142-residue polypeptide: Large ribosomal subunit protein uL13 (142 aa).

The protein belongs to the universal ribosomal protein uL13 family. As to quaternary structure, part of the 50S ribosomal subunit.

In terms of biological role, this protein is one of the early assembly proteins of the 50S ribosomal subunit, although it is not seen to bind rRNA by itself. It is important during the early stages of 50S assembly. The sequence is that of Large ribosomal subunit protein uL13 from Marinomonas sp. (strain MWYL1).